A 106-amino-acid chain; its full sequence is HIG1 domain family member 2B (106 aa).

The Cytoplasmic portion of the chain corresponds to methionine 1–asparagine 46. In terms of domain architecture, HIG1 spans isoleucine 20–proline 106. The helical transmembrane segment at proline 47–phenylalanine 67 threads the bilayer. At histidine 68–threonine 81 the chain is on the extracellular side. The helical transmembrane segment at glutamine 82 to methionine 102 threads the bilayer. Topologically, residues lysine 103–proline 106 are cytoplasmic.

The protein resides in the membrane. This is HIG1 domain family member 2B (HIGD2B) from Homo sapiens (Human).